The following is a 417-amino-acid chain: S-inosyl-L-homocysteine hydrolase (417 aa).

Substrate-binding residues include aspartate 124 and glutamate 149. 150-152 (TTT) lines the NAD(+) pocket. The substrate site is built by lysine 179 and aspartate 183. Residues asparagine 184, 213 to 218 (GYGWCG), glutamate 236, asparagine 271, 292 to 294 (SGH), and asparagine 339 contribute to the NAD(+) site.

The protein belongs to the adenosylhomocysteinase family. The cofactor is NAD(+).

The protein resides in the cytoplasm. The catalysed reaction is S-inosyl-L-homocysteine + H2O = L-homocysteine + inosine. Its pathway is amino-acid biosynthesis; S-adenosyl-L-methionine biosynthesis. Its function is as follows. Catalyzes the hydrolysis of S-inosyl-L-homocysteine (SIH) to L-homocysteine (Hcy) and inosine. Likely functions in a S-adenosyl-L-methionine (SAM) recycling pathway from S-adenosyl-L-homocysteine (SAH) produced from SAM-dependent methylation reactions. Can also catalyze the reverse reaction in vitro, i.e. the synthesis of SIH from Hcy and inosine. This is S-inosyl-L-homocysteine hydrolase from Methanothermobacter thermautotrophicus (strain ATCC 29096 / DSM 1053 / JCM 10044 / NBRC 100330 / Delta H) (Methanobacterium thermoautotrophicum).